The following is a 239-amino-acid chain: Serine protease SplC (239 aa).

Residues Met-1–Ala-36 form the signal peptide. Residues His-75, Asp-113, and Ser-193 each act as charge relay system in the active site.

This sequence belongs to the peptidase S1B family.

The protein resides in the secreted. The polypeptide is Serine protease SplC (splC) (Staphylococcus aureus (strain MW2)).